Consider the following 385-residue polypeptide: Pectate lyase E (385 aa).

A signal peptide spans M1–A30. Position 164 (D164) interacts with Ca(2+). Repeat 1 spans residues D177–S182. The tract at residues D177 to S218 is 2 X 6 AA approximate repeats. Residue D207 coordinates Ca(2+). The stretch at D213–S218 is repeat 2. Residue R260 is part of the active site.

It belongs to the polysaccharide lyase 1 family. PLBC subfamily. Ca(2+) is required as a cofactor.

Its subcellular location is the secreted. The catalysed reaction is Eliminative cleavage of (1-&gt;4)-alpha-D-galacturonan to give oligosaccharides with 4-deoxy-alpha-D-galact-4-enuronosyl groups at their non-reducing ends.. Its pathway is glycan metabolism; pectin degradation; 2-dehydro-3-deoxy-D-gluconate from pectin: step 2/5. In terms of biological role, involved in maceration and soft-rotting of plant tissue. The protein is Pectate lyase E (pelE) of Dickeya chrysanthemi (Pectobacterium chrysanthemi).